We begin with the raw amino-acid sequence, 167 residues long: Brain ribonuclease (167 aa).

An N-terminal signal peptide occupies residues 1–26 (MALKSLVLLSLLVLVLLLVQVQPSLG). 2 residues coordinate substrate: lysine 33 and arginine 36. Histidine 38 serves as the catalytic Proton acceptor. 4 cysteine pairs are disulfide-bonded: cysteine 52–cysteine 110, cysteine 66–cysteine 121, cysteine 84–cysteine 136, and cysteine 91–cysteine 98. 67–71 (KPVNT) is a substrate binding site. Residue asparagine 88 is glycosylated (N-linked (GlcNAc...) asparagine). Positions 92 and 111 each coordinate substrate. The active-site Proton donor is histidine 145. Residue threonine 155 is glycosylated (O-linked (GalNAc...) threonine). Serine 159 is a glycosylation site (O-linked (GalNAc...) serine).

The protein belongs to the pancreatic ribonuclease family.

Its subcellular location is the secreted. This is Brain ribonuclease (BRN) from Bos taurus (Bovine).